An 89-amino-acid polypeptide reads, in one-letter code: MANSAQAKKRARQNVKARKHNASLRSMVRTYIKRTVNAIAAGDYTVATEAYKKAVPVIDRMADKGIIHKNKAARHKSRLNAQVKALASN.

The disordered stretch occupies residues 1 to 21; it reads MANSAQAKKRARQNVKARKHN. A compositionally biased stretch (basic residues) spans 7 to 21; it reads AKKRARQNVKARKHN.

Belongs to the bacterial ribosomal protein bS20 family.

In terms of biological role, binds directly to 16S ribosomal RNA. This Acinetobacter baylyi (strain ATCC 33305 / BD413 / ADP1) protein is Small ribosomal subunit protein bS20.